The primary structure comprises 356 residues: Glycerophosphodiester phosphodiesterase (356 aa).

Positions 1–20 (MRGTYCVTLWGGVFAALVAG) are cleaved as a signal peptide. Cys21 carries N-palmitoyl cysteine lipidation. Residue Cys21 is the site of S-diacylglycerol cysteine attachment. The GP-PDE domain maps to 25–314 (RMIVAYRGAA…CHVHTVRKET (290 aa)).

Belongs to the glycerophosphoryl diester phosphodiesterase family. In terms of processing, palmitoylated upon expression of a fusion protein with first 40 residues fused to PhoA in E.coli.

Its subcellular location is the cell inner membrane. It catalyses the reaction a sn-glycero-3-phosphodiester + H2O = an alcohol + sn-glycerol 3-phosphate + H(+). In terms of biological role, glycerophosphoryl diester phosphodiesterase hydrolyzes deacylated phospholipids to G3P and the corresponding alcohols. Binds human IgA, IgD and the Fc portion of IgG but not IgM, which may contribute to evasion of the human immune system. This Treponema pallidum (strain Nichols) protein is Glycerophosphodiester phosphodiesterase (glpQ).